Reading from the N-terminus, the 213-residue chain is Nucleolar protein 12 (213 aa).

Residues 33 to 96 (GFHKRKVERK…RLVTAKTESV (64 aa)) adopt a coiled-coil conformation. The segment at 118–213 (ARLLGLTPPE…LTGKARHSGE (96 aa)) is disordered. 2 stretches are compositionally biased toward basic residues: residues 170–182 (AHSRKKVKRKHPR) and 198–213 (KAQRRRLTGKARHSGE).

It belongs to the RRP17 family. In terms of assembly, interacts with KIAA1191.

It localises to the nucleus. The protein resides in the nucleolus. Its subcellular location is the cytoplasm. Functionally, multifunctional RNA binding protein that plays a role in RNA metabolism and DNA maintenance. Participates in the resolution of DNA stress and the maintenance of genome integrity by localizing to sites of DNA insults. Also plays a role in proper nucleolar organization by limiting nucleolar size and regulating nucleolar number. Mechanistically, regulates the nucleolar levels of fibrillarin and nucleolin, two key players in pre-rRNA processing and ribosome assembly. This chain is Nucleolar protein 12 (NOL12), found in Homo sapiens (Human).